A 215-amino-acid polypeptide reads, in one-letter code: Nascent polypeptide-associated complex subunit alpha (215 aa).

Positions Met-1 to Ser-81 are disordered. A compositionally biased stretch (polar residues) spans Val-9 to Val-21. The segment covering Ser-29 to Asp-42 has biased composition (acidic residues). Over residues Ser-43 to Ala-57 the composition is skewed to low complexity. In terms of domain architecture, NAC-A/B spans Ser-70–Ala-135. Positions Val-176–Leu-213 constitute a UBA domain.

It belongs to the NAC-alpha family.

Its function is as follows. May promote appropriate targeting of ribosome-nascent polypeptide complexes. This chain is Nascent polypeptide-associated complex subunit alpha (naca), found in Oreochromis niloticus (Nile tilapia).